The following is a 775-amino-acid chain: Cation channel sperm-associated protein subunit epsilon-like protein (775 aa).

The N-terminal stretch at 1–20 is a signal peptide; sequence MLARRVVAALLLWLSCCVSA. Asparagine 62 and asparagine 114 each carry an N-linked (GlcNAc...) asparagine glycan.

It belongs to the CATSPERD family.

The polypeptide is Cation channel sperm-associated protein subunit epsilon-like protein (Mus musculus (Mouse)).